We begin with the raw amino-acid sequence, 156 residues long: Transcription elongation factor GreA (156 aa).

Residues 1–32 (MKKVRLTREGYEKLKKELEDLKRKFMYEISER) are a coiled coil.

Belongs to the GreA/GreB family.

Functionally, necessary for efficient RNA polymerase transcription elongation past template-encoded arresting sites. The arresting sites in DNA have the property of trapping a certain fraction of elongating RNA polymerases that pass through, resulting in locked ternary complexes. Cleavage of the nascent transcript by cleavage factors such as GreA or GreB allows the resumption of elongation from the new 3'terminus. GreA releases sequences of 2 to 3 nucleotides. The protein is Transcription elongation factor GreA of Thermotoga petrophila (strain ATCC BAA-488 / DSM 13995 / JCM 10881 / RKU-1).